The following is a 458-amino-acid chain: UDP-N-acetylmuramoylalanine--D-glutamate ligase (458 aa).

Residue 124-130 (GSDGKTT) participates in ATP binding.

It belongs to the MurCDEF family.

Its subcellular location is the cytoplasm. It catalyses the reaction UDP-N-acetyl-alpha-D-muramoyl-L-alanine + D-glutamate + ATP = UDP-N-acetyl-alpha-D-muramoyl-L-alanyl-D-glutamate + ADP + phosphate + H(+). It participates in cell wall biogenesis; peptidoglycan biosynthesis. Functionally, cell wall formation. Catalyzes the addition of glutamate to the nucleotide precursor UDP-N-acetylmuramoyl-L-alanine (UMA). The sequence is that of UDP-N-acetylmuramoylalanine--D-glutamate ligase from Clostridium tetani (strain Massachusetts / E88).